Reading from the N-terminus, the 366-residue chain is GDSL esterase/lipase At1g74460 (366 aa).

Residues methionine 1–cysteine 20 form the signal peptide. Serine 30 (nucleophile) is an active-site residue. Residues asparagine 113 and asparagine 260 are each glycosylated (N-linked (GlcNAc...) asparagine). Residues aspartate 320 and histidine 323 contribute to the active site.

It belongs to the 'GDSL' lipolytic enzyme family.

Its subcellular location is the secreted. This is GDSL esterase/lipase At1g74460 from Arabidopsis thaliana (Mouse-ear cress).